Here is a 367-residue protein sequence, read N- to C-terminus: MSNPSLLILPGDGIGPEVMAEVRKIIGWFGDKRGLNFDVSEDLVGGAAYDVHGVPLADETMAKAQEADAVLLGAVGGPKYDDLDFSVKPERGLLRLRKEMDLFSNLRPAQCFDALADFSSLKKDIVAGLDIMIVRELTSGVYFGEPRGIFEEGNERVGINTQRYTESEIERVARSAFELAMRRSKKLCSMEKANVMESGILWREVVTRVAKDYPEVELSHMYADNGAMQLVRAPKQFDVILTDNLFGDILSDCAAMLTGSLGMLPSASLGAPMANGRPKALYEPVHGSAPDIAGQGKANPIACILSFAMALRYSFDQGAEADRLEAAVEQVLADGVRTADLLGTEGVTPVSTTEMGAAILAKLDASL.

77 to 90 serves as a coordination point for NAD(+); the sequence is GPKYDDLDFSVKPE. Substrate is bound by residues Arg97, Arg107, Arg135, and Asp224. Mg(2+) is bound by residues Asp224, Asp248, and Asp252. NAD(+) is bound at residue 287–299; the sequence is GSAPDIAGQGKAN.

Belongs to the isocitrate and isopropylmalate dehydrogenases family. LeuB type 1 subfamily. As to quaternary structure, homodimer. It depends on Mg(2+) as a cofactor. The cofactor is Mn(2+).

It is found in the cytoplasm. The catalysed reaction is (2R,3S)-3-isopropylmalate + NAD(+) = 4-methyl-2-oxopentanoate + CO2 + NADH. It participates in amino-acid biosynthesis; L-leucine biosynthesis; L-leucine from 3-methyl-2-oxobutanoate: step 3/4. Its function is as follows. Catalyzes the oxidation of 3-carboxy-2-hydroxy-4-methylpentanoate (3-isopropylmalate) to 3-carboxy-4-methyl-2-oxopentanoate. The product decarboxylates to 4-methyl-2 oxopentanoate. The chain is 3-isopropylmalate dehydrogenase from Ruegeria pomeroyi (strain ATCC 700808 / DSM 15171 / DSS-3) (Silicibacter pomeroyi).